Consider the following 276-residue polypeptide: Alpha N-terminal protein methyltransferase 1 (276 aa).

Residues 1 to 57 (MTTTLEEQLSDKLQMMDETTDKVQGSSKQKDDSSIAASSDAKTASPSSSDSSTKVAA) form a disordered region. A compositionally biased stretch (low complexity) spans 34–57 (SIAASSDAKTASPSSSDSSTKVAA). Residues Gly114, Arg119, 136–138 (EQD), 167–168 (LQ), and Gln182 each bind S-adenosyl-L-methionine.

Belongs to the methyltransferase superfamily. NTM1 family.

The enzyme catalyses N-terminal L-alanyl-L-prolyl-L-lysyl-[protein] + 3 S-adenosyl-L-methionine = N-terminal N,N,N-trimethyl-L-alanyl-L-prolyl-L-lysyl-[protein] + 3 S-adenosyl-L-homocysteine + 3 H(+). It carries out the reaction N-terminal L-seryl-L-prolyl-L-lysyl-[protein] + 3 S-adenosyl-L-methionine = N-terminal N,N,N-trimethyl-L-seryl-L-prolyl-L-lysyl-[protein] + 3 S-adenosyl-L-homocysteine + 3 H(+). It catalyses the reaction N-terminal L-prolyl-L-prolyl-L-lysyl-[protein] + 2 S-adenosyl-L-methionine = N-terminal N,N-dimethyl-L-prolyl-L-prolyl-L-lysyl-[protein] + 2 S-adenosyl-L-homocysteine + 2 H(+). Alpha-N-methyltransferase that methylates the N-terminus of target proteins containing the N-terminal motif [Ala/Pro/Ser]-Pro-Lys when the initiator Met is cleaved. Specifically catalyzes mono-, di- or tri-methylation of exposed alpha-amino group of Ala or Ser residue in the [Ala/Ser]-Pro-Lys motif and mono- or di-methylation of Pro in the Pro-Pro-Lys motif. The protein is Alpha N-terminal protein methyltransferase 1 (Ntmt) of Drosophila melanogaster (Fruit fly).